We begin with the raw amino-acid sequence, 255 residues long: 2-(S)-hydroxypropyl-CoM dehydrogenase 3 (255 aa).

Residues isoleucine 19, aspartate 38, 64–65 (DV), and asparagine 91 contribute to the NAD(+) site. Residues serine 143 and tyrosine 156 each coordinate (S)-2-hydroxypropyl-coenzyme M. The active-site Proton acceptor is tyrosine 156. Lysine 160 is a binding site for NAD(+). Threonine 188 contributes to the (S)-2-hydroxypropyl-coenzyme M binding site. 189-193 (VTSTG) serves as a coordination point for NAD(+). Residue tyrosine 215 coordinates (S)-2-hydroxypropyl-coenzyme M.

This sequence belongs to the short-chain dehydrogenases/reductases (SDR) family. Homotetramer.

The catalysed reaction is (S)-2-hydroxypropyl-coenzyme M + NAD(+) = 2-oxopropyl-coenzyme M + NADH + H(+). With respect to regulation, not inhibited by 2-(2-methyl-2-hydroxypropylthio)ethanesulfonate (M-HPC), an achiral analog of both R-HPC and S-HPC. Involved in aliphatic epoxide carboxylation. Catalyzes the reversible oxidation of (2S)-2-hydroxypropyl-coenzyme M (S-HPC) to 2-oxopropyl-coenzyme M (2-KPC). The enzyme is highly specific for the S enantiomers. In vitro can also use the aliphatic ketone 2-butanone and the aliphatic alcohol 2-propanol, and shows an inherent stereoselectivity for 2-butanone reduction. This is 2-(S)-hydroxypropyl-CoM dehydrogenase 3 from Xanthobacter autotrophicus (strain ATCC BAA-1158 / Py2).